The primary structure comprises 370 residues: Gibberellin 3-beta-dioxygenase 2-2 (370 aa).

The 102-residue stretch at 205-306 (MTATMHLNWY…RISLGYFLGP (102 aa)) folds into the Fe2OG dioxygenase domain. Fe cation is bound by residues H229, D231, and H287. The active site involves R297.

It belongs to the iron/ascorbate-dependent oxidoreductase family. GA3OX subfamily. L-ascorbate is required as a cofactor. It depends on Fe cation as a cofactor.

The enzyme catalyses gibberellin A20 + 2-oxoglutarate + O2 = gibberellin A1 + succinate + CO2. Functionally, converts the inactive gibberellin precursors GA9 and GA20 in the bioactives gibberellins GA4 and GA1. This chain is Gibberellin 3-beta-dioxygenase 2-2 (GA3ox2-2), found in Triticum aestivum (Wheat).